Here is a 560-residue protein sequence, read N- to C-terminus: Alpha-keto-acid decarboxylase (560 aa).

E61 provides a ligand contact to thiamine diphosphate. The thiamine pyrophosphate binding stretch occupies residues 396-478; the sequence is TSFYGMADHR…VVVNNDGYTV (83 aa). Residues D446, N473, and G475 each coordinate Mg(2+).

Belongs to the TPP enzyme family. The cofactor is a metal cation. Requires thiamine diphosphate as cofactor.

Its function is as follows. Decarboxylates branched-chain and aromatic alpha-keto acids to aldehydes. The polypeptide is Alpha-keto-acid decarboxylase (kdc) (Mycobacterium tuberculosis (strain CDC 1551 / Oshkosh)).